Reading from the N-terminus, the 255-residue chain is Pyridoxine 5'-phosphate synthase (255 aa).

N6 is a binding site for 3-amino-2-oxopropyl phosphate. 8–9 is a binding site for 1-deoxy-D-xylulose 5-phosphate; it reads DH. R17 contacts 3-amino-2-oxopropyl phosphate. The Proton acceptor role is filled by H41. 1-deoxy-D-xylulose 5-phosphate is bound by residues R43 and H48. The active-site Proton acceptor is E68. T96 lines the 1-deoxy-D-xylulose 5-phosphate pocket. H208 acts as the Proton donor in catalysis. Residues G209 and 230 to 231 contribute to the 3-amino-2-oxopropyl phosphate site; that span reads GQ.

This sequence belongs to the PNP synthase family. In terms of assembly, homooctamer; tetramer of dimers.

It is found in the cytoplasm. The catalysed reaction is 3-amino-2-oxopropyl phosphate + 1-deoxy-D-xylulose 5-phosphate = pyridoxine 5'-phosphate + phosphate + 2 H2O + H(+). The protein operates within cofactor biosynthesis; pyridoxine 5'-phosphate biosynthesis; pyridoxine 5'-phosphate from D-erythrose 4-phosphate: step 5/5. Catalyzes the complicated ring closure reaction between the two acyclic compounds 1-deoxy-D-xylulose-5-phosphate (DXP) and 3-amino-2-oxopropyl phosphate (1-amino-acetone-3-phosphate or AAP) to form pyridoxine 5'-phosphate (PNP) and inorganic phosphate. The chain is Pyridoxine 5'-phosphate synthase from Campylobacter lari (strain RM2100 / D67 / ATCC BAA-1060).